Consider the following 280-residue polypeptide: Energy-coupling factor transporter ATP-binding protein EcfA1 (280 aa).

An ABC transporter domain is found at Ile-6–Asp-244. Gly-43 to Ser-50 is a binding site for ATP.

It belongs to the ABC transporter superfamily. Energy-coupling factor EcfA family. As to quaternary structure, forms a stable energy-coupling factor (ECF) transporter complex composed of 2 membrane-embedded substrate-binding proteins (S component), 2 ATP-binding proteins (A component) and 2 transmembrane proteins (T component).

The protein resides in the cell membrane. In terms of biological role, ATP-binding (A) component of a common energy-coupling factor (ECF) ABC-transporter complex. Unlike classic ABC transporters this ECF transporter provides the energy necessary to transport a number of different substrates. This Clostridium novyi (strain NT) protein is Energy-coupling factor transporter ATP-binding protein EcfA1.